The chain runs to 164 residues: Crossover junction endodeoxyribonuclease RuvC (164 aa).

Residues Asp7, Glu67, and Asp140 contribute to the active site. Mg(2+) contacts are provided by Asp7, Glu67, and Asp140.

Belongs to the RuvC family. As to quaternary structure, homodimer which binds Holliday junction (HJ) DNA. The HJ becomes 2-fold symmetrical on binding to RuvC with unstacked arms; it has a different conformation from HJ DNA in complex with RuvA. In the full resolvosome a probable DNA-RuvA(4)-RuvB(12)-RuvC(2) complex forms which resolves the HJ. Mg(2+) is required as a cofactor.

Its subcellular location is the cytoplasm. It carries out the reaction Endonucleolytic cleavage at a junction such as a reciprocal single-stranded crossover between two homologous DNA duplexes (Holliday junction).. Functionally, the RuvA-RuvB-RuvC complex processes Holliday junction (HJ) DNA during genetic recombination and DNA repair. Endonuclease that resolves HJ intermediates. Cleaves cruciform DNA by making single-stranded nicks across the HJ at symmetrical positions within the homologous arms, yielding a 5'-phosphate and a 3'-hydroxyl group; requires a central core of homology in the junction. The consensus cleavage sequence is 5'-(A/T)TT(C/G)-3'. Cleavage occurs on the 3'-side of the TT dinucleotide at the point of strand exchange. HJ branch migration catalyzed by RuvA-RuvB allows RuvC to scan DNA until it finds its consensus sequence, where it cleaves and resolves the cruciform DNA. The protein is Crossover junction endodeoxyribonuclease RuvC of Chloroflexus aurantiacus (strain ATCC 29364 / DSM 637 / Y-400-fl).